A 196-amino-acid chain; its full sequence is Dephospho-CoA kinase (196 aa).

The 191-residue stretch at 6-196 folds into the DPCK domain; sequence AIALTGGIGT…QVERFLKTLL (191 aa). 14–19 is an ATP binding site; the sequence is GTGKST.

It belongs to the CoaE family.

Its subcellular location is the cytoplasm. It carries out the reaction 3'-dephospho-CoA + ATP = ADP + CoA + H(+). It participates in cofactor biosynthesis; coenzyme A biosynthesis; CoA from (R)-pantothenate: step 5/5. In terms of biological role, catalyzes the phosphorylation of the 3'-hydroxyl group of dephosphocoenzyme A to form coenzyme A. This Helicobacter pylori (strain ATCC 700392 / 26695) (Campylobacter pylori) protein is Dephospho-CoA kinase.